A 311-amino-acid polypeptide reads, in one-letter code: 4-diphosphocytidyl-2-C-methyl-D-erythritol kinase (311 aa).

Residue Lys9 is part of the active site. 95 to 105 (PLGAGLAGGST) contributes to the ATP binding site. The active site involves Asp137.

The protein belongs to the GHMP kinase family. IspE subfamily.

The enzyme catalyses 4-CDP-2-C-methyl-D-erythritol + ATP = 4-CDP-2-C-methyl-D-erythritol 2-phosphate + ADP + H(+). Its pathway is isoprenoid biosynthesis; isopentenyl diphosphate biosynthesis via DXP pathway; isopentenyl diphosphate from 1-deoxy-D-xylulose 5-phosphate: step 3/6. In terms of biological role, catalyzes the phosphorylation of the position 2 hydroxy group of 4-diphosphocytidyl-2C-methyl-D-erythritol. In Thermosynechococcus vestitus (strain NIES-2133 / IAM M-273 / BP-1), this protein is 4-diphosphocytidyl-2-C-methyl-D-erythritol kinase.